Here is a 152-residue protein sequence, read N- to C-terminus: Large ribosomal subunit protein uL15 (152 aa).

Positions 1–57 (MTSTLNTLKSNSGSRKKKLRKGRGIAAGQGASCGFGMRGQKSRSGRPTRPGFEGGQM) are disordered. Over residues 14–23 (SRKKKLRKGR) the composition is skewed to basic residues. Residues 25 to 37 (IAAGQGASCGFGM) are compositionally biased toward gly residues.

It belongs to the universal ribosomal protein uL15 family. Part of the 50S ribosomal subunit.

Functionally, binds to the 23S rRNA. This chain is Large ribosomal subunit protein uL15, found in Prochlorococcus marinus (strain MIT 9312).